A 146-amino-acid polypeptide reads, in one-letter code: MIF-like protein mif-3 (146 aa).

It belongs to the MIF family.

The polypeptide is MIF-like protein mif-3 (mif-3) (Caenorhabditis elegans).